The following is a 142-amino-acid chain: Mitochondrial import receptor subunit TOM22 homolog (142 aa).

Residues 1-11 (MAAAVAAAGAG) are compositionally biased toward low complexity. The disordered stretch occupies residues 1–42 (MAAAVAAAGAGEPQSPDELLPKGDAEKPEEELEEDDDEELDE). Ala2 is subject to N-acetylalanine. The Cytoplasmic segment spans residues 2-83 (AAAVAAAGAG…AQKMYRFSRA (82 aa)). Residue Ser15 is modified to Phosphoserine. Positions 27-42 (KPEEELEEDDDEELDE) are enriched in acidic residues. Residues 41-50 (DETLSERLWG) are import sequence; necessary for mitochondrion outer membrane localization and integration in the TOM complex. At Thr43 the chain carries Phosphothreonine. The residue at position 45 (Ser45) is a Phosphoserine. The interval 83–103 (AALWIGTTSFMILVLPVVFET) is TMD; necessary for mitochondrion outer membrane localization and integration in the TOM complex. A helical transmembrane segment spans residues 84–103 (ALWIGTTSFMILVLPVVFET). Over 104–142 (EKLQMEQQQQLQQRQILLGPNTGLSGGMPGALPSLPGKI) the chain is Mitochondrial intermembrane. The tract at residues 123–142 (PNTGLSGGMPGALPSLPGKI) is C-tail signal; necessary for mitochondrion outer membrane localization and integration in the TOM complex.

Belongs to the Tom22 family. In terms of assembly, forms part of the preprotein translocase complex of the outer mitochondrial membrane (TOM complex) which consists of at least 7 different proteins (TOMM5, TOMM6, TOMM7, TOMM20, TOMM22, TOMM40 and TOMM70). Interacts with TOMM40. Interacts with PPP2R2B. Ubiquitous.

It localises to the mitochondrion outer membrane. Functionally, central receptor component of the translocase of the outer membrane of mitochondria (TOM complex) responsible for the recognition and translocation of cytosolically synthesized mitochondrial preproteins. Together with the peripheral receptor TOM20 functions as the transit peptide receptor and facilitates the movement of preproteins into the translocation pore. Required for the translocation across the mitochondrial outer membrane of cytochrome P450 monooxygenases. The chain is Mitochondrial import receptor subunit TOM22 homolog (TOMM22) from Homo sapiens (Human).